The primary structure comprises 1318 residues: Serine/threonine-protein kinase ppk18 (1318 aa).

The tract at residues 431 to 485 (PSVSPEEVHDISQFNHRNDPPITAASVDSSNSFSVHRSSTNHSSTNSGSPNLSRR) is disordered. A compositionally biased stretch (low complexity) spans 462 to 479 (SFSVHRSSTNHSSTNSGS). Residues 566–934 (YEIIKPISKG…INEIKEHPFF (369 aa)) enclose the Protein kinase domain. ATP-binding positions include 572–580 (ISKGTFGTV) and K595. D690 (proton acceptor) is an active-site residue. In terms of domain architecture, AGC-kinase C-terminal spans 935 to 1044 (NGINWDDIFS…KNLSVLERAN (110 aa)). 3 disordered regions span residues 968 to 1022 (GAAE…FSEA), 1058 to 1078 (KLHISPPDPHIGYTPGSDMPS), and 1091 to 1127 (SLMTNQGSNFSSTDSTPRKSINSSDVESRSKTDGPKS). Over residues 972 to 1000 (SNMSSSVNSGEEVSKDNNVSQERGSQFLR) the composition is skewed to polar residues. Polar residues predominate over residues 1091–1115 (SLMTNQGSNFSSTDSTPRKSINSSD). The span at 1116–1127 (VESRSKTDGPKS) shows a compositional bias: basic and acidic residues. In terms of domain architecture, Response regulatory spans 1200–1316 (KALICVSKLN…LLRGYIARLC (117 aa)).

The protein belongs to the protein kinase superfamily. Ser/Thr protein kinase family.

It localises to the cytoplasm. The catalysed reaction is L-seryl-[protein] + ATP = O-phospho-L-seryl-[protein] + ADP + H(+). It carries out the reaction L-threonyl-[protein] + ATP = O-phospho-L-threonyl-[protein] + ADP + H(+). This is Serine/threonine-protein kinase ppk18 (ppk18) from Schizosaccharomyces pombe (strain 972 / ATCC 24843) (Fission yeast).